We begin with the raw amino-acid sequence, 118 residues long: MEKIKKFLIQLLNMRARNTVDIIASIVGAVIIAAAISALLFSIASFLGFYSKDLSPLVYSIVSLAVIPVLRRNVPKKPILSLLTAFSIPILFLSGVEWLKLVASVLLGYLAASSLKDS.

Transmembrane regions (helical) follow at residues 22-44 (IIAS…FSIA), 54-71 (LSPL…PVLR), and 78-99 (PILS…VEWL).

It localises to the cell membrane. This is an uncharacterized protein from Archaeoglobus fulgidus (strain ATCC 49558 / DSM 4304 / JCM 9628 / NBRC 100126 / VC-16).